We begin with the raw amino-acid sequence, 879 residues long: Translation initiation factor IF-2 (879 aa).

Disordered stretches follow at residues 45 to 216 (AGHM…ERKR) and 228 to 293 (SYEE…EKPV). Composition is skewed to basic and acidic residues over residues 60-72 (NAAKSDNKSDKNS), 83-99 (RKTDARKSQSSEKKISP), and 107-163 (AEKK…ERLQ). The segment covering 164–173 (MEAALQAQMQ) has biased composition (low complexity). Basic and acidic residues-rich tracts occupy residues 174 to 216 (EQER…ERKR), 228 to 271 (SYEE…ERRN), and 280 to 291 (RNNDNKKGKFEK). The tr-type G domain occupies 380-549 (VRAPVVTIMG…LIQAEMLELT (170 aa)). Positions 389 to 396 (GHVDHGKT) are G1. 389 to 396 (GHVDHGKT) contributes to the GTP binding site. The interval 414 to 418 (GITQH) is G2. The segment at 435 to 438 (DTPG) is G3. GTP is bound by residues 435-439 (DTPGH) and 489-492 (NKMD). The segment at 489–492 (NKMD) is G4. The interval 525–527 (SAK) is G5.

Belongs to the TRAFAC class translation factor GTPase superfamily. Classic translation factor GTPase family. IF-2 subfamily.

Its subcellular location is the cytoplasm. Its function is as follows. One of the essential components for the initiation of protein synthesis. Protects formylmethionyl-tRNA from spontaneous hydrolysis and promotes its binding to the 30S ribosomal subunits. Also involved in the hydrolysis of GTP during the formation of the 70S ribosomal complex. The sequence is that of Translation initiation factor IF-2 from Dichelobacter nodosus (strain VCS1703A).